The chain runs to 623 residues: V-type proton ATPase catalytic subunit A (623 aa).

Position 252–259 (252–259 (GAFGCGKT)) interacts with ATP.

This sequence belongs to the ATPase alpha/beta chains family. As to quaternary structure, V-ATPase is a heteromultimeric enzyme composed of a peripheral catalytic V1 complex (main components: subunits A, B, C, D, E, and F) attached to an integral membrane V0 proton pore complex (main component: the proteolipid protein).

The catalysed reaction is ATP + H2O + 4 H(+)(in) = ADP + phosphate + 5 H(+)(out). Functionally, catalytic subunit of the peripheral V1 complex of vacuolar ATPase. V-ATPase vacuolar ATPase is responsible for acidifying a variety of intracellular compartments in eukaryotic cells. The chain is V-type proton ATPase catalytic subunit A from Brassica napus (Rape).